A 352-amino-acid polypeptide reads, in one-letter code: Holliday junction branch migration complex subunit RuvB (352 aa).

Positions 4-191 (TDKFSAPDRV…FGIVARLEFY (188 aa)) are large ATPase domain (RuvB-L). ATP contacts are provided by residues Leu-30, Arg-31, Gly-72, Lys-75, Thr-76, Thr-77, 138–140 (EDY), Arg-181, Tyr-191, and Arg-228. A Mg(2+)-binding site is contributed by Thr-76. The interval 192–262 (TAEELARIVT…IADAALAMLD (71 aa)) is small ATPAse domain (RuvB-S). The tract at residues 265 to 352 (RVGFDLMDRK…GDSGDLIDGE (88 aa)) is head domain (RuvB-H). 3 residues coordinate DNA: Arg-301, Arg-320, and Arg-325.

It belongs to the RuvB family. In terms of assembly, homohexamer. Forms an RuvA(8)-RuvB(12)-Holliday junction (HJ) complex. HJ DNA is sandwiched between 2 RuvA tetramers; dsDNA enters through RuvA and exits via RuvB. An RuvB hexamer assembles on each DNA strand where it exits the tetramer. Each RuvB hexamer is contacted by two RuvA subunits (via domain III) on 2 adjacent RuvB subunits; this complex drives branch migration. In the full resolvosome a probable DNA-RuvA(4)-RuvB(12)-RuvC(2) complex forms which resolves the HJ.

The protein resides in the cytoplasm. The enzyme catalyses ATP + H2O = ADP + phosphate + H(+). The RuvA-RuvB-RuvC complex processes Holliday junction (HJ) DNA during genetic recombination and DNA repair, while the RuvA-RuvB complex plays an important role in the rescue of blocked DNA replication forks via replication fork reversal (RFR). RuvA specifically binds to HJ cruciform DNA, conferring on it an open structure. The RuvB hexamer acts as an ATP-dependent pump, pulling dsDNA into and through the RuvAB complex. RuvB forms 2 homohexamers on either side of HJ DNA bound by 1 or 2 RuvA tetramers; 4 subunits per hexamer contact DNA at a time. Coordinated motions by a converter formed by DNA-disengaged RuvB subunits stimulates ATP hydrolysis and nucleotide exchange. Immobilization of the converter enables RuvB to convert the ATP-contained energy into a lever motion, pulling 2 nucleotides of DNA out of the RuvA tetramer per ATP hydrolyzed, thus driving DNA branch migration. The RuvB motors rotate together with the DNA substrate, which together with the progressing nucleotide cycle form the mechanistic basis for DNA recombination by continuous HJ branch migration. Branch migration allows RuvC to scan DNA until it finds its consensus sequence, where it cleaves and resolves cruciform DNA. The sequence is that of Holliday junction branch migration complex subunit RuvB from Cupriavidus pinatubonensis (strain JMP 134 / LMG 1197) (Cupriavidus necator (strain JMP 134)).